Reading from the N-terminus, the 86-residue chain is Large ribosomal subunit protein bL31 (86 aa).

The tract at residues 65–86 (YRMASSDSSEQKDKSSEEKKES) is disordered. Over residues 73–86 (SEQKDKSSEEKKES) the composition is skewed to basic and acidic residues.

Belongs to the bacterial ribosomal protein bL31 family. Type A subfamily. As to quaternary structure, part of the 50S ribosomal subunit.

Binds the 23S rRNA. This chain is Large ribosomal subunit protein bL31, found in Prochlorococcus marinus (strain NATL1A).